The sequence spans 215 residues: Thiamine-phosphate synthase (215 aa).

4-amino-2-methyl-5-(diphosphooxymethyl)pyrimidine contacts are provided by residues Gln37–Lys41 and Asn69. Mg(2+)-binding residues include Asp70 and Asp89. Position 108 (Ser108) interacts with 4-amino-2-methyl-5-(diphosphooxymethyl)pyrimidine. Residue Thr134–Thr136 participates in 2-[(2R,5Z)-2-carboxy-4-methylthiazol-5(2H)-ylidene]ethyl phosphate binding. Lys137 is a 4-amino-2-methyl-5-(diphosphooxymethyl)pyrimidine binding site. 2-[(2R,5Z)-2-carboxy-4-methylthiazol-5(2H)-ylidene]ethyl phosphate-binding positions include Gly166 and Val186–Ser187.

The protein belongs to the thiamine-phosphate synthase family. The cofactor is Mg(2+).

It catalyses the reaction 2-[(2R,5Z)-2-carboxy-4-methylthiazol-5(2H)-ylidene]ethyl phosphate + 4-amino-2-methyl-5-(diphosphooxymethyl)pyrimidine + 2 H(+) = thiamine phosphate + CO2 + diphosphate. The catalysed reaction is 2-(2-carboxy-4-methylthiazol-5-yl)ethyl phosphate + 4-amino-2-methyl-5-(diphosphooxymethyl)pyrimidine + 2 H(+) = thiamine phosphate + CO2 + diphosphate. It carries out the reaction 4-methyl-5-(2-phosphooxyethyl)-thiazole + 4-amino-2-methyl-5-(diphosphooxymethyl)pyrimidine + H(+) = thiamine phosphate + diphosphate. It functions in the pathway cofactor biosynthesis; thiamine diphosphate biosynthesis; thiamine phosphate from 4-amino-2-methyl-5-diphosphomethylpyrimidine and 4-methyl-5-(2-phosphoethyl)-thiazole: step 1/1. Functionally, condenses 4-methyl-5-(beta-hydroxyethyl)thiazole monophosphate (THZ-P) and 2-methyl-4-amino-5-hydroxymethyl pyrimidine pyrophosphate (HMP-PP) to form thiamine monophosphate (TMP). In Yersinia pestis (strain Pestoides F), this protein is Thiamine-phosphate synthase.